A 760-amino-acid polypeptide reads, in one-letter code: Xaa-Pro dipeptidyl-peptidase (760 aa).

Residues serine 349, aspartate 469, and histidine 499 each act as charge relay system in the active site.

Belongs to the peptidase S15 family. In terms of assembly, homodimer.

The protein localises to the cytoplasm. The catalysed reaction is Hydrolyzes Xaa-Pro-|- bonds to release unblocked, N-terminal dipeptides from substrates including Ala-Pro-|-p-nitroanilide and (sequentially) Tyr-Pro-|-Phe-Pro-|-Gly-Pro-|-Ile.. Removes N-terminal dipeptides sequentially from polypeptides having unsubstituted N-termini provided that the penultimate residue is proline. The chain is Xaa-Pro dipeptidyl-peptidase from Streptococcus pyogenes serotype M4 (strain MGAS10750).